Here is a 269-residue protein sequence, read N- to C-terminus: Phosphate import ATP-binding protein PstB 2 (269 aa).

Residues 23–264 enclose the ABC transporter domain; sequence LHTEDLHVFY…PKIQATEDYV (242 aa). Residue 55 to 62 participates in ATP binding; sequence GPSGCGKS.

This sequence belongs to the ABC transporter superfamily. Phosphate importer (TC 3.A.1.7) family. The complex is composed of two ATP-binding proteins (PstB), two transmembrane proteins (PstC and PstA) and a solute-binding protein (PstS).

Its subcellular location is the cell membrane. The catalysed reaction is phosphate(out) + ATP + H2O = ADP + 2 phosphate(in) + H(+). In terms of biological role, part of the ABC transporter complex PstSACB involved in phosphate import. Responsible for energy coupling to the transport system. The protein is Phosphate import ATP-binding protein PstB 2 of Enterococcus faecalis (strain ATCC 700802 / V583).